Reading from the N-terminus, the 270-residue chain is Protein-ADP-ribose hydrolase (270 aa).

The Macro domain occupies V73–N267. Residues D92, I93, and N106 each coordinate ADP-D-ribose. 3 residues coordinate Zn(2+): C112, H117, and C119. ADP-D-ribose contacts are provided by C119, I120, D121, S212, T213, G214, E215, and F216.

The protein belongs to the MacroD-type family. Zn-Macro subfamily. In terms of assembly, monomer. Interacts with the lipoylated form of GcvH-L. Requires Zn(2+) as cofactor.

It carries out the reaction 4-O-(ADP-D-ribosyl)-L-aspartyl-[protein] + H2O = L-aspartyl-[protein] + ADP-D-ribose + H(+). The catalysed reaction is 5-O-(ADP-D-ribosyl)-L-glutamyl-[protein] + H2O = L-glutamyl-[protein] + ADP-D-ribose + H(+). It catalyses the reaction S-(ADP-D-ribosyl)-L-cysteinyl-[protein] + H2O = ADP-D-ribose + L-cysteinyl-[protein]. Functionally, ADP-ribosylhydrolase that specifically reverses the SirTM-mediated mono-ADP-ribosylation at an asparatate residue of GcvH-L (SpyM50867), by releasing ADP-ribose from the target protein. May play a role in the regulation of the response to host-induced oxidative stress. It can also hydrolyze ADP-ribosyl-glutamate bonds and ADP-ribosyl-cysteine bonds. In vitro, it can remove the ADP-ribosyl modification from the human mono-ADP-ribosylated PARP1 E988Q mutant, which is primarily modified on glutamate site with only minor aspartate contribution. It can also hydrolyze the ADP-ribosyl-cysteinyl glycosidic bond of a Cys-ADP-ribosylated synthetic peptide. The sequence is that of Protein-ADP-ribose hydrolase from Streptococcus pyogenes serotype M5 (strain Manfredo).